We begin with the raw amino-acid sequence, 132 residues long: Small ribosomal subunit protein uS8 (132 aa).

Belongs to the universal ribosomal protein uS8 family. Part of the 30S ribosomal subunit. Contacts proteins S5 and S12.

One of the primary rRNA binding proteins, it binds directly to 16S rRNA central domain where it helps coordinate assembly of the platform of the 30S subunit. In Parvibaculum lavamentivorans (strain DS-1 / DSM 13023 / NCIMB 13966), this protein is Small ribosomal subunit protein uS8.